The sequence spans 125 residues: MRWQGSSRRKATGGKVITARGKRKFEMGRESAETRISEIKRKKVPTMGGNRKVRLLQSNVANVTNPKDGKTVTAPIETVIDNTANKHYVRRNILTKGSVIRTSMGTARVTSRPGQDGVVNAVLIE.

This sequence belongs to the eukaryotic ribosomal protein eS8 family. Part of the 30S ribosomal subunit.

This is Small ribosomal subunit protein eS8 from Methanosarcina acetivorans (strain ATCC 35395 / DSM 2834 / JCM 12185 / C2A).